Consider the following 625-residue polypeptide: Adenine deaminase 2 (625 aa).

Belongs to the metallo-dependent hydrolases superfamily. Adenine deaminase family. Requires Mn(2+) as cofactor.

The catalysed reaction is adenine + H2O + H(+) = hypoxanthine + NH4(+). This Bradyrhizobium diazoefficiens (strain JCM 10833 / BCRC 13528 / IAM 13628 / NBRC 14792 / USDA 110) protein is Adenine deaminase 2.